Here is a 212-residue protein sequence, read N- to C-terminus: Imidazole glycerol phosphate synthase subunit HisH (212 aa).

The Glutamine amidotransferase type-1 domain occupies Asp-3–Pro-212. The active-site Nucleophile is Cys-82. Active-site residues include His-192 and Glu-194.

Heterodimer of HisH and HisF.

The protein resides in the cytoplasm. It catalyses the reaction 5-[(5-phospho-1-deoxy-D-ribulos-1-ylimino)methylamino]-1-(5-phospho-beta-D-ribosyl)imidazole-4-carboxamide + L-glutamine = D-erythro-1-(imidazol-4-yl)glycerol 3-phosphate + 5-amino-1-(5-phospho-beta-D-ribosyl)imidazole-4-carboxamide + L-glutamate + H(+). The catalysed reaction is L-glutamine + H2O = L-glutamate + NH4(+). The protein operates within amino-acid biosynthesis; L-histidine biosynthesis; L-histidine from 5-phospho-alpha-D-ribose 1-diphosphate: step 5/9. IGPS catalyzes the conversion of PRFAR and glutamine to IGP, AICAR and glutamate. The HisH subunit catalyzes the hydrolysis of glutamine to glutamate and ammonia as part of the synthesis of IGP and AICAR. The resulting ammonia molecule is channeled to the active site of HisF. The sequence is that of Imidazole glycerol phosphate synthase subunit HisH from Aromatoleum aromaticum (strain DSM 19018 / LMG 30748 / EbN1) (Azoarcus sp. (strain EbN1)).